The sequence spans 583 residues: Arginine--tRNA ligase (583 aa).

The 'HIGH' region signature appears at 123–133; that stretch reads PNIAKEMHVGH.

This sequence belongs to the class-I aminoacyl-tRNA synthetase family. In terms of assembly, monomer.

The protein localises to the cytoplasm. It catalyses the reaction tRNA(Arg) + L-arginine + ATP = L-arginyl-tRNA(Arg) + AMP + diphosphate. The sequence is that of Arginine--tRNA ligase from Blochmanniella floridana.